The following is a 79-amino-acid chain: MGSLSIWHWIVVIAVILLLFGRGKISDLMGDVAQGIKAFKKGMQDDEKTAEKPEPVKTIDHNAPAPGASRSDVGSKTTV.

A helical membrane pass occupies residues 1-21; the sequence is MGSLSIWHWIVVIAVILLLFG. The span at 43–60 shows a compositional bias: basic and acidic residues; that stretch reads MQDDEKTAEKPEPVKTID. The tract at residues 43–79 is disordered; the sequence is MQDDEKTAEKPEPVKTIDHNAPAPGASRSDVGSKTTV.

The protein belongs to the TatA/E family. The Tat system comprises two distinct complexes: a TatABC complex, containing multiple copies of TatA, TatB and TatC subunits, and a separate TatA complex, containing only TatA subunits. Substrates initially bind to the TatABC complex, which probably triggers association of the separate TatA complex to form the active translocon.

The protein localises to the cell inner membrane. Functionally, part of the twin-arginine translocation (Tat) system that transports large folded proteins containing a characteristic twin-arginine motif in their signal peptide across membranes. TatA could form the protein-conducting channel of the Tat system. This Nitrobacter hamburgensis (strain DSM 10229 / NCIMB 13809 / X14) protein is Sec-independent protein translocase protein TatA.